The chain runs to 120 residues: Large ribosomal subunit protein uL18 (120 aa).

Residues 1 to 22 (MKTTRKESLKRRHRRIRRKVSG) form a disordered region. The segment covering 8–20 (SLKRRHRRIRRKV) has biased composition (basic residues).

This sequence belongs to the universal ribosomal protein uL18 family. Part of the 50S ribosomal subunit; part of the 5S rRNA/L5/L18/L25 subcomplex. Contacts the 5S and 23S rRNAs.

In terms of biological role, this is one of the proteins that bind and probably mediate the attachment of the 5S RNA into the large ribosomal subunit, where it forms part of the central protuberance. The sequence is that of Large ribosomal subunit protein uL18 from Crocosphaera subtropica (strain ATCC 51142 / BH68) (Cyanothece sp. (strain ATCC 51142)).